Reading from the N-terminus, the 115-residue chain is DNA-directed RNA polymerase II subunit RPB11-b2 (115 aa).

It belongs to the archaeal Rpo11/eukaryotic RPB11/RPC19 RNA polymerase subunit family. Component of the RNA polymerase II (Pol II) complex consisting of 12 subunits.

Its subcellular location is the nucleus. Functionally, DNA-dependent RNA polymerase catalyzes the transcription of DNA into RNA using the four ribonucleoside triphosphates as substrates. Component of RNA polymerase II which synthesizes mRNA precursors and many functional non-coding RNAs. Pol II is the central component of the basal RNA polymerase II transcription machinery. It is composed of mobile elements that move relative to each other. RPB11 is part of the core element with the central large cleft. In Homo sapiens (Human), this protein is DNA-directed RNA polymerase II subunit RPB11-b2 (POLR2J3).